A 279-amino-acid chain; its full sequence is DegV domain-containing protein lmo1863 (279 aa).

The DegV domain occupies Ile4–Thr278. Hexadecanoate is bound by residues Ser62 and Ser94.

May bind long-chain fatty acids, such as palmitate, and may play a role in lipid transport or fatty acid metabolism. The chain is DegV domain-containing protein lmo1863 from Listeria monocytogenes serovar 1/2a (strain ATCC BAA-679 / EGD-e).